A 983-amino-acid polypeptide reads, in one-letter code: Chaperone protein ClpB3, mitochondrial (983 aa).

A mitochondrion-targeting transit peptide spans 1–87; that stretch reads MSRATAVSRL…LFHPTQAARY (87 aa). A Clp R domain is found at 97 to 240; that stretch reads PGEFTEMAWE…KEAISAVRGS (144 aa). Repeat regions lie at residues 100 to 165 and 177 to 240; these read FTEM…ISRQ and IGSS…VRGS. The tract at residues 255–503 is i; the sequence is LEKYGIDMTE…KLKMEITSKP (249 aa). An ATP-binding site is contributed by 300–307; it reads GEPGVGKT. The stretch at 504 to 627 forms a coiled coil; sequence IELDEVDREI…QQSGKSMLRE (124 aa). The tract at residues 629–820 is II; the sequence is VTDVDIAEIV…VIIMTSNIGS (192 aa). 703–710 is an ATP binding site; that stretch reads GPTGVGKT.

Belongs to the ClpA/ClpB family.

It is found in the mitochondrion. Functionally, molecular chaperone that may not be involved in heat stress response or tolerance. This Oryza sativa subsp. japonica (Rice) protein is Chaperone protein ClpB3, mitochondrial (CLPB3).